A 231-amino-acid chain; its full sequence is uncharacterized protein (231 aa).

10–34 (VVTGAGSGIGEAIATLLHEEGAKVV) provides a ligand contact to NADP(+). Position 140 (Ser140) interacts with substrate. The Proton acceptor role is filled by Tyr153.

The protein belongs to the short-chain dehydrogenases/reductases (SDR) family.

This is an uncharacterized protein from Staphylococcus aureus (strain MW2).